Consider the following 561-residue polypeptide: Putative transport protein KPN78578_08530 (561 aa).

5 helical membrane passes run leucine 8–glycine 28, leucine 37–isoleucine 57, phenylalanine 66–phenylalanine 86, methionine 94–phenylalanine 114, and histidine 158–alanine 178. 2 RCK C-terminal domains span residues leucine 202 to asparagine 288 and valine 292 to phenylalanine 373. A run of 5 helical transmembrane segments spans residues leucine 383–phenylalanine 403, phenylalanine 406–leucine 426, phenylalanine 447–glycine 467, alanine 478–leucine 498, and alanine 540–leucine 560.

Belongs to the AAE transporter (TC 2.A.81) family. YbjL subfamily.

It is found in the cell membrane. This chain is Putative transport protein KPN78578_08530, found in Klebsiella pneumoniae subsp. pneumoniae (strain ATCC 700721 / MGH 78578).